The chain runs to 450 residues: Probable ATP-dependent RNA helicase MG425 homolog (450 aa).

The Q motif signature appears at Ser-3–Gln-31. In terms of domain architecture, Helicase ATP-binding spans Ile-34 to Leu-206. Ser-47 to Thr-54 contributes to the ATP binding site. Positions Asp-154–Asp-157 match the DEVD box motif. Residues Arg-234 to Ile-384 form the Helicase C-terminal domain. The tract at residues Met-429–Met-450 is disordered. Residues Arg-430–Met-450 show a composition bias toward basic and acidic residues.

It belongs to the DEAD box helicase family.

It carries out the reaction ATP + H2O = ADP + phosphate + H(+). This is Probable ATP-dependent RNA helicase MG425 homolog from Mycoplasma pneumoniae (strain ATCC 29342 / M129 / Subtype 1) (Mycoplasmoides pneumoniae).